The primary structure comprises 495 residues: UDP-N-acetylmuramoyl-L-alanyl-D-glutamate--2,6-diaminopimelate ligase (495 aa).

Residues leucine 27, serine 29, and 44–46 (HQA) contribute to the UDP-N-acetyl-alpha-D-muramoyl-L-alanyl-D-glutamate site. 116–122 (GTNGKTT) contributes to the ATP binding site. Residues asparagine 157, 158–159 (TT), serine 185, glutamine 191, and arginine 193 each bind UDP-N-acetyl-alpha-D-muramoyl-L-alanyl-D-glutamate. Lysine 225 is subject to N6-carboxylysine. Meso-2,6-diaminopimelate contacts are provided by residues arginine 390, 414 to 417 (DNPR), glycine 465, and glutamate 469. Positions 414 to 417 (DNPR) match the Meso-diaminopimelate recognition motif motif.

The protein belongs to the MurCDEF family. MurE subfamily. Mg(2+) serves as cofactor. Carboxylation is probably crucial for Mg(2+) binding and, consequently, for the gamma-phosphate positioning of ATP.

Its subcellular location is the cytoplasm. The catalysed reaction is UDP-N-acetyl-alpha-D-muramoyl-L-alanyl-D-glutamate + meso-2,6-diaminopimelate + ATP = UDP-N-acetyl-alpha-D-muramoyl-L-alanyl-gamma-D-glutamyl-meso-2,6-diaminopimelate + ADP + phosphate + H(+). Its pathway is cell wall biogenesis; peptidoglycan biosynthesis. Functionally, catalyzes the addition of meso-diaminopimelic acid to the nucleotide precursor UDP-N-acetylmuramoyl-L-alanyl-D-glutamate (UMAG) in the biosynthesis of bacterial cell-wall peptidoglycan. In Shigella flexneri, this protein is UDP-N-acetylmuramoyl-L-alanyl-D-glutamate--2,6-diaminopimelate ligase.